An 809-amino-acid polypeptide reads, in one-letter code: Sucrose synthase 2 (809 aa).

The segment at 278–756 is GT-B glycosyltransferase; that stretch reads MVFNVVILSP…GLQRIYERYT (479 aa).

It belongs to the glycosyltransferase 1 family. Plant sucrose synthase subfamily.

The catalysed reaction is an NDP-alpha-D-glucose + D-fructose = a ribonucleoside 5'-diphosphate + sucrose + H(+). Sucrose-cleaving enzyme that provides UDP-glucose and fructose for various metabolic pathways. In Pisum sativum (Garden pea), this protein is Sucrose synthase 2 (SUS2).